The chain runs to 507 residues: Anthranilate synthase component 1 (507 aa).

Residue serine 65 participates in L-tryptophan binding. Phosphoserine is present on serine 81. At threonine 223 the chain carries Phosphothreonine. Position 280–282 (280–282 (PYL)) interacts with L-tryptophan. Residue 316-317 (GT) participates in chorismate binding. Glutamate 343 contributes to the Mg(2+) binding site. Residues tyrosine 431, arginine 452, 466–468 (GGG), and glycine 468 contribute to the chorismate site. Glutamate 481 lines the Mg(2+) pocket.

The protein belongs to the anthranilate synthase component I family. Tetramer of two components I and two components II. It depends on Mg(2+) as a cofactor.

The catalysed reaction is chorismate + L-glutamine = anthranilate + pyruvate + L-glutamate + H(+). The protein operates within amino-acid biosynthesis; L-tryptophan biosynthesis; L-tryptophan from chorismate: step 1/5. The sequence is that of Anthranilate synthase component 1 (TRP2) from Saccharomyces cerevisiae (strain ATCC 204508 / S288c) (Baker's yeast).